The following is a 651-amino-acid chain: Probable replication restart protein PriA (651 aa).

8 residues coordinate Zn(2+): C371, C374, C380, C383, C399, C402, C411, and C414.

It belongs to the helicase family. PriA subfamily. As to quaternary structure, component of the replication restart primosome. The cofactor is Zn(2+).

In terms of biological role, initiates the restart of stalled replication forks, which reloads the replicative helicase on sites other than the origin of replication. Recognizes and binds to abandoned replication forks and remodels them to uncover a helicase loading site. Promotes assembly of the primosome at these replication forks. This is Probable replication restart protein PriA from Mycobacterium leprae (strain TN).